The chain runs to 234 residues: Melanoregulin (234 aa).

The segment at 215 to 234 (MNQNISGGEDEDEDESEPDD) is disordered. Acidic residues predominate over residues 222 to 234 (GEDEDEDESEPDD).

It belongs to the melanoregulin family.

Its subcellular location is the apical cell membrane. It localises to the melanosome membrane. The protein resides in the lysosome membrane. The protein localises to the cytoplasmic vesicle membrane. Probably functions as a cargo-recognition protein that couples cytoplasmic vesicles to the transport machinery. Contributes to retrograde melanosome transport from the cell periphery to the center. Overexpression causes accumulation of late endosomes and/or lysosomes at the microtubule organising center (MTOC) at the center of the cell. Probably binds cholesterol and requires the presence of cholesterol in membranes to function in microtubule-mediated retrograde organelle transport. Binds phosphatidylinositol 3-phosphate, phosphatidylinositol 4-phosphate, phosphatidylinositol 5-phosphate and phosphatidylinositol 3,5-bisphosphate. The polypeptide is Melanoregulin (mreg) (Danio rerio (Zebrafish)).